The primary structure comprises 1130 residues: DNA-directed RNA polymerase I subunit rpa2 (1130 aa).

The C4-type zinc-finger motif lies at 1070–1096 (CKLCGSTLTIYSKKDYSNQTVSECKSC).

It belongs to the RNA polymerase beta chain family. In terms of assembly, component of the RNA polymerase I (Pol I) complex consisting of 14 subunits.

It localises to the nucleus. The protein resides in the nucleolus. The enzyme catalyses RNA(n) + a ribonucleoside 5'-triphosphate = RNA(n+1) + diphosphate. Its function is as follows. DNA-dependent RNA polymerase catalyzes the transcription of DNA into RNA using the four ribonucleoside triphosphates as substrates. Second largest core component of RNA polymerase I which synthesizes ribosomal RNA precursors. Proposed to contribute to the polymerase catalytic activity and forms the polymerase active center together with the largest subunit. Pol I is composed of mobile elements and RPA2 is part of the core element with the central large cleft and probably a clamp element that moves to open and close the cleft. This chain is DNA-directed RNA polymerase I subunit rpa2 (polr1b), found in Dictyostelium discoideum (Social amoeba).